The sequence spans 118 residues: Large ribosomal subunit protein bL20 (118 aa).

The protein belongs to the bacterial ribosomal protein bL20 family.

Its function is as follows. Binds directly to 23S ribosomal RNA and is necessary for the in vitro assembly process of the 50S ribosomal subunit. It is not involved in the protein synthesizing functions of that subunit. This chain is Large ribosomal subunit protein bL20, found in Tolumonas auensis (strain DSM 9187 / NBRC 110442 / TA 4).